The following is a 99-amino-acid chain: UPF0473 protein SMU_2077c (99 aa).

The protein belongs to the UPF0473 family.

This chain is UPF0473 protein SMU_2077c, found in Streptococcus mutans serotype c (strain ATCC 700610 / UA159).